The following is a 679-amino-acid chain: DNA ligase (679 aa).

NAD(+)-binding positions include 43–47 (DYVYD), 92–93 (SM), and Glu124. Catalysis depends on Lys126, which acts as the N6-AMP-lysine intermediate. The NAD(+) site is built by Arg147, Glu181, Lys297, and Lys321. Cys415, Cys418, Cys433, and Cys438 together coordinate Zn(2+). In terms of domain architecture, BRCT spans 599 to 679 (TESAEWAGKR…RFDQAMKEEN (81 aa)).

This sequence belongs to the NAD-dependent DNA ligase family. LigA subfamily. It depends on Mg(2+) as a cofactor. The cofactor is Mn(2+).

The catalysed reaction is NAD(+) + (deoxyribonucleotide)n-3'-hydroxyl + 5'-phospho-(deoxyribonucleotide)m = (deoxyribonucleotide)n+m + AMP + beta-nicotinamide D-nucleotide.. In terms of biological role, DNA ligase that catalyzes the formation of phosphodiester linkages between 5'-phosphoryl and 3'-hydroxyl groups in double-stranded DNA using NAD as a coenzyme and as the energy source for the reaction. It is essential for DNA replication and repair of damaged DNA. The protein is DNA ligase of Limosilactobacillus fermentum (strain NBRC 3956 / LMG 18251) (Lactobacillus fermentum).